Reading from the N-terminus, the 125-residue chain is 13 kDa ribonucleoprotein-associated protein (125 aa).

Belongs to the eukaryotic ribosomal protein eL8 family. In terms of assembly, component of the U3 snoRNP particle. Binds to the C'/D and B/C motifs in U3 snoRNA. Component of the 25S U4/U6.U5 tri-snRNP particle, a subcomplex of the spliceosome. Binds to the 5' stem-loop of U4 snRNA.

It is found in the nucleus. The protein localises to the nucleolus. Functionally, common component of the spliceosome and rRNA processing machinery. In association with the spliceosomal U4/U6.U5 tri-snRNP particle, required for splicing of pre-mRNA. In association with box C/D snoRNPs, required for processing of pre-ribosomal RNA (rRNA) and site-specific 2'-O-methylation of substrate RNAs. Essential for the accumulation and stability of U4 snRNA, U6 snRNA, and box C/D snoRNAs. In Schizosaccharomyces pombe (strain 972 / ATCC 24843) (Fission yeast), this protein is 13 kDa ribonucleoprotein-associated protein (snu13).